A 463-amino-acid chain; its full sequence is tRNA-2-methylthio-N(6)-dimethylallyladenosine synthase (463 aa).

The 121-residue stretch at 5-125 folds into the MTTase N-terminal domain; sequence RKLHIKSYGC…LPQLLAKAEQ (121 aa). [4Fe-4S] cluster contacts are provided by Cys14, Cys50, Cys88, Cys166, Cys170, and Cys173. Positions 152–384 constitute a Radical SAM core domain; sequence RARGISAFVT…QQLIDQQQSA (233 aa). The TRAM domain maps to 387-449; it reads KAAIGRTVEV…RYSLLGELAS (63 aa).

The protein belongs to the methylthiotransferase family. MiaB subfamily. In terms of assembly, monomer. [4Fe-4S] cluster is required as a cofactor.

It is found in the cytoplasm. It carries out the reaction N(6)-dimethylallyladenosine(37) in tRNA + (sulfur carrier)-SH + AH2 + 2 S-adenosyl-L-methionine = 2-methylsulfanyl-N(6)-dimethylallyladenosine(37) in tRNA + (sulfur carrier)-H + 5'-deoxyadenosine + L-methionine + A + S-adenosyl-L-homocysteine + 2 H(+). Its function is as follows. Catalyzes the methylthiolation of N6-(dimethylallyl)adenosine (i(6)A), leading to the formation of 2-methylthio-N6-(dimethylallyl)adenosine (ms(2)i(6)A) at position 37 in tRNAs that read codons beginning with uridine. This chain is tRNA-2-methylthio-N(6)-dimethylallyladenosine synthase, found in Rhodopseudomonas palustris (strain TIE-1).